The chain runs to 103 residues: DNA-directed RNA polymerase subunit omega (103 aa).

Belongs to the RNA polymerase subunit omega family. In terms of assembly, the RNAP catalytic core consists of 2 alpha, 1 beta, 1 beta' and 1 omega subunit. When a sigma factor is associated with the core the holoenzyme is formed, which can initiate transcription.

The catalysed reaction is RNA(n) + a ribonucleoside 5'-triphosphate = RNA(n+1) + diphosphate. Promotes RNA polymerase assembly. Latches the N- and C-terminal regions of the beta' subunit thereby facilitating its interaction with the beta and alpha subunits. The chain is DNA-directed RNA polymerase subunit omega from Streptococcus agalactiae serotype III (strain NEM316).